The primary structure comprises 379 residues: UDP-N-acetylglucosamine--N-acetylmuramyl-(pentapeptide) pyrophosphoryl-undecaprenol N-acetylglucosamine transferase (379 aa).

UDP-N-acetyl-alpha-D-glucosamine contacts are provided by residues 17 to 19 (TGG), N128, R169, S197, and Q298.

This sequence belongs to the glycosyltransferase 28 family. MurG subfamily.

It localises to the cell inner membrane. The catalysed reaction is di-trans,octa-cis-undecaprenyl diphospho-N-acetyl-alpha-D-muramoyl-L-alanyl-D-glutamyl-meso-2,6-diaminopimeloyl-D-alanyl-D-alanine + UDP-N-acetyl-alpha-D-glucosamine = di-trans,octa-cis-undecaprenyl diphospho-[N-acetyl-alpha-D-glucosaminyl-(1-&gt;4)]-N-acetyl-alpha-D-muramoyl-L-alanyl-D-glutamyl-meso-2,6-diaminopimeloyl-D-alanyl-D-alanine + UDP + H(+). The protein operates within cell wall biogenesis; peptidoglycan biosynthesis. In terms of biological role, cell wall formation. Catalyzes the transfer of a GlcNAc subunit on undecaprenyl-pyrophosphoryl-MurNAc-pentapeptide (lipid intermediate I) to form undecaprenyl-pyrophosphoryl-MurNAc-(pentapeptide)GlcNAc (lipid intermediate II). This chain is UDP-N-acetylglucosamine--N-acetylmuramyl-(pentapeptide) pyrophosphoryl-undecaprenol N-acetylglucosamine transferase, found in Brucella canis (strain ATCC 23365 / NCTC 10854 / RM-666).